The following is a 383-amino-acid chain: Mating-type protein MAT-1 (383 aa).

Residues 60 to 117 (KARKALNAFVGFRCYYVTIPMFKSWPMKKLSNLIGLLWEADPNKSLWSLMAKAWSTIR) constitute a DNA-binding region (alpha box).

This sequence belongs to the MATALPHA1 family.

Its subcellular location is the nucleus. Functionally, mating type proteins are sequence specific DNA-binding proteins that act as master switches in fungal differentiation by controlling gene expression in a cell type-specific fashion. Transcriptional activator that induces the transcription of alpha-specific genes. This is Mating-type protein MAT-1 (MAT1) from Cochliobolus heterostrophus (Southern corn leaf blight fungus).